Reading from the N-terminus, the 161-residue chain is Transcriptional regulator MraZ (161 aa).

SpoVT-AbrB domains lie at 7–55 (RYTN…GPAF) and 84–127 (SAEL…EPGA).

This sequence belongs to the MraZ family. Forms oligomers.

It is found in the cytoplasm. The protein localises to the nucleoid. This chain is Transcriptional regulator MraZ, found in Parvibaculum lavamentivorans (strain DS-1 / DSM 13023 / NCIMB 13966).